A 143-amino-acid chain; its full sequence is uncharacterized protein (143 aa).

This is an uncharacterized protein from Homo sapiens (Human).